The chain runs to 2310 residues: Peroxide stress-activated histidine kinase mak2 (2310 aa).

Residues 12 to 292 form the Protein kinase domain; the sequence is DYAISQLGEF…SATDLCYTIV (281 aa). The region spanning 1450–1592 is the GAF domain; that stretch reads RLGPLLTTVI…LLSQQIAISV (143 aa). Residues 1760-1986 enclose the Histidine kinase domain; that stretch reads NMSHELRTPF…TFWFHVQLRN (227 aa). His1763 carries the post-translational modification Phosphohistidine; by autocatalysis. Residues 2180–2303 form the Response regulatory domain; it reads YALIAEDNLI…QLVNAVREFV (124 aa). The residue at position 2232 (Asp2232) is a 4-aspartylphosphate.

It localises to the cytoplasm. It catalyses the reaction ATP + protein L-histidine = ADP + protein N-phospho-L-histidine.. Its function is as follows. Involved in the control of the SAPK-dependent transcriptional response to peroxide stress. Regulates sty1 activity. This is Peroxide stress-activated histidine kinase mak2 (mak2) from Schizosaccharomyces pombe (strain 972 / ATCC 24843) (Fission yeast).